Consider the following 1003-residue polypeptide: Retinoblastoma-related protein 1 (1003 aa).

Residues 405 to 607 are domain A; sequence TPVSTAMTTA…EKGSSMYNSL (203 aa). The tract at residues 405–860 is pocket; it reads TPVSTAMTTA…NEMFIPSVKP (456 aa). Residues 608–729 form a spacer region; that stretch reads AVAKPSLAAE…PGGGGETCAE (122 aa). Positions 730 to 860 are domain B; the sequence is TAINVFFGKI…NEMFIPSVKP (131 aa). The interval 868–899 is disordered; sequence AGNNSEKNDHNDGQGPASPKPSPFPKLPDMSP.

The protein belongs to the retinoblastoma protein (RB) family. Expressed in roots, stems, leaves and flowers.

It is found in the nucleus. Functionally, regulator of biological processes that recruits a histone deacetylase to control gene transcription. Formation of stable complexes with geminiviridae replication-associated proteins may create a cellular environment which favors viral DNA replication. May play a role in the entry into mitosis, negatively regulating the cell proliferation during leaf, stem, and flower development. Critical regulator of the endocycle. The polypeptide is Retinoblastoma-related protein 1 (RBR1) (Nicotiana benthamiana).